Here is a 547-residue protein sequence, read N- to C-terminus: MSSAKLGSASEDVSRRDANYHPTVWGDFFLTHSSNFLENNDSILEKHEELKQEVRNLLVVETSDLPSKIQLTDEIIRLGVGYHFETEIKAQLEKLHDHQLHLNFDLLTTSVWFRLLRGHGFSIPSDVFKRFKNTKGEFETEDARTLWCLYEATHLRVDGEDILEEAIQFSRKRLEALLPKLSFPLSECVRDALHIPYHRNVQRLAARQYIPQYDAEQTKIESLSLFAKIDFNMLQALHQSELREASRWWKEFDFPSKLPYARDRIAEGYYWMMGAHFEPKFSLSRKFLNRIVGITSLIDDTYDVYGTLEEVTLFTEAVERWDIEAVKDIPKYMQVIYIGMLGIFEDFKDNLINARGKDYCIDYAIEVFKEIVRSYQREAEYFHTGYVPSYDEYMENSIISGGYKMFIILMLIGRGEFELKETLDWASTIPEMVKASSLIARYIDDLQTYKAEEERGETVSAVRCYMREFGVSEEQACKKMREMIEIEWKRLNKTTLEADEISSSVVIPSLNFTRVLEVMYDKGDGYSDSQGVTKDRIAALLRHAIEI.

Residues aspartate 299, aspartate 303, and aspartate 444 each contribute to the Mg(2+) site. Residues 299–303 carry the DDXXD motif motif; it reads DDTYD.

The protein belongs to the terpene synthase family. The cofactor is Mg(2+).

The enzyme catalyses (2E,6E)-farnesyl diphosphate = delta-guaiene + diphosphate. The catalysed reaction is (2E,6E)-farnesyl diphosphate = alpha-guaiene + diphosphate. The protein operates within secondary metabolite biosynthesis; terpenoid biosynthesis. Sesquiterpene synthase involved in the biosynthesis of delta-guaiene (53.7%) and alpha-guaiene (44.6%), two structures composed of five- and seven-membered rings. Also produces 1.7% of alpha-humulene. The sequence is that of Delta-guaiene synthase 2 (C3) from Aquilaria crassna (Eagle wood).